The sequence spans 474 residues: MSLTIAIVGRPNVGKSTLFNRLVGQKLALVDDKPGVTRDRRIHAAKLQDLRFDVIDTAGLEEAGDHTLEGRMRSQTKAAIDEADLILFVFDAKSGITPSDLNFASLVRKSGKPIVLVANKSESKAATGGEYEAWSLGLGEPCPISAEHGLGLSDLRDAIIDAVGSERAFSNNKEEDMTIQPASVGDDIEDLQEEGLIYDESKPIRIAIAGRPNTGKSTLINSMLKQDRLLTGPEAGLTRDSISVDWEWRGRHIKLFDTAGLRRKSKIQEKLEKLSVADTLRAIRFAEVVVIVFDATMPFEKQDLQIADLVIREGRVPVIAFNKWDLIENSQATLIDLHEKCARFLPQVRGLRAVPLSGQYGQGIDKLMENIMMMHRVWNRRISTAKLNQWLEIVVAHHPPPAISGRRLKVKYITQVKTRPPGFMISCSRPKVMPQSYLRYLVNGLRETFDMSGIPVRLSLRASDNPFATRAKKK.

EngA-type G domains follow at residues 3–167 (LTIA…GSER) and 204–379 (IRIA…RVWN). GTP contacts are provided by residues 9 to 16 (GRPNVGKS), 56 to 60 (DTAGL), 119 to 122 (NKSE), 210 to 217 (GRPNTGKS), 257 to 261 (DTAGL), and 322 to 325 (NKWD). One can recognise a KH-like domain in the interval 380–464 (RRISTAKLNQ…PVRLSLRASD (85 aa)).

It belongs to the TRAFAC class TrmE-Era-EngA-EngB-Septin-like GTPase superfamily. EngA (Der) GTPase family. As to quaternary structure, associates with the 50S ribosomal subunit.

Functionally, GTPase that plays an essential role in the late steps of ribosome biogenesis. The sequence is that of GTPase Der from Bartonella tribocorum (strain CIP 105476 / IBS 506).